The following is a 2168-amino-acid chain: Bromodomain adjacent to zinc finger domain protein 2B (2168 aa).

8 disordered regions span residues 1–29 (MESG…ASVV), 140–348 (FAPP…KQPQ), 409–428 (LKAG…SELR), 459–479 (SNPK…ENNH), 528–698 (STPF…LHIA), 719–740 (GTSS…RRVT), 841–872 (MEGR…PPNV), and 1021–1043 (RKKA…LNKE). A compositionally biased stretch (low complexity) spans 8-29 (PSSAASSTTPTSSSTPSVASVV). Polar residues-rich tracts occupy residues 146–163 (NHDS…SNRN) and 171–193 (GSIN…STTA). 2 stretches are compositionally biased toward low complexity: residues 194-204 (SSSMGQTKSTS) and 240-263 (ESSS…ISSS). Residues 264–291 (DSDDLEEDEEEEDQSIEESEDDDSDSES) are compositionally biased toward acidic residues. Over residues 307–325 (SDPKADGQKATEKAQEKRI) the composition is skewed to basic and acidic residues. The span at 335 to 348 (SQTHSFQSQQKQPQ) shows a compositional bias: low complexity. Composition is skewed to polar residues over residues 461-479 (PKAT…ENNH) and 528-551 (STPF…QTPV). Over residues 592 to 605 (RGTDSDIPSSKDSE) the composition is skewed to basic and acidic residues. Acidic residues predominate over residues 606–663 (DSNEDEEEDDEEEDEEDDEDDESDDSQSESDSNSESDTEGSEEEDDDDKDQDESDSDT). The segment covering 670–693 (MKLNKTTSSVKSPSMSLTGHSTPR) has biased composition (polar residues). Residues 720–732 (TSSSTLTSSPHSG) are compositionally biased toward low complexity. One can recognise an MBD domain in the interval 739-810 (VTDERELRIP…DNFSFSAKIR (72 aa)). Residues 841-861 (MEGRRGRPPNPDRQRAREESR) are compositionally biased toward basic and acidic residues. The stretch at 883-1061 (AKLLRKLQAQ…ELEMAKELKK (179 aa)) forms a coiled coil. One can recognise a DDT domain in the interval 1087-1152 (GSTFSDCLMV…LSAAVCDPGL (66 aa)). The interval 1265–1341 (KRDTSGGIDL…CEDEDEGDQA (77 aa)) is disordered. Residues 1297 to 1321 (SDYDDDDDDDSDDQGDEDDEDEEDK) are compositionally biased toward acidic residues. Positions 1322 to 1331 (EDKKGKKTDI) are enriched in basic and acidic residues. A coiled-coil region spans residues 1334-1375 (DEDEGDQAASVEELEKQIEKLSKQQSQYRRKLFDASHSLRSV). Lys1425 participates in a covalent cross-link: Glycyl lysine isopeptide (Lys-Gly) (interchain with G-Cter in SUMO2). N6-acetyllysine is present on Lys1462. 2 positions are modified to phosphoserine: Ser1465 and Ser1467. The span at 1503–1533 (SGKHSLGSVQSTATQSNVEKADSNNLFNTGS) shows a compositional bias: polar residues. Disordered stretches follow at residues 1503 to 1542 (SGKH…FYSP), 1582 to 1607 (SLVT…SSAQ), and 1670 to 1694 (TSNV…AQPA). Residues 1588 to 1600 (SQPPSKSPSPTPA) show a composition bias toward pro residues. Positions 1670–1692 (TSNVASSKSESPVPQNEKATSAQ) are enriched in polar residues. The residue at position 1680 (Ser1680) is a Phosphoserine. The PHD-type zinc-finger motif lies at 1931-1981 (KVYCQICRKGDNEELLLLCDGCDKGCHTYCHRPKITTIPDGDWFCPACIAK). The tract at residues 1998 to 2040 (KTNESKKGKKVTLTGDTEDEDSASTSSSLKRGNKDLKKRKMEE) is disordered. The residue at position 2014 (Thr2014) is a Phosphothreonine. Ser2019 carries the phosphoserine modification. Basic and acidic residues predominate over residues 2029 to 2040 (GNKDLKKRKMEE). The 105-residue stretch at 2060 to 2164 (RDDSKDLALC…KYFEKKWTDT (105 aa)) folds into the Bromo domain.

This sequence belongs to the WAL family. As to quaternary structure, component of the BRF-1 ISWI chromatin remodeling complex, at least composed of SMARCA1 and BAZ2B, which regulates the spacing of histone octamers on the DNA template to facilitate access to DNA. Within the BRF-1 ISWI chromatin remodeling complex interacts with SMARCA1; the interaction is direct. Component of the BRF-5 ISWI chromatin remodeling complex, at least composed of SMARCA5/SNF2H and BAZ2B, which regulates the spacing of histone octamers on the DNA template to facilitate access to DNA. Within the BRF-5 ISWI chromatin remodeling complex interacts with SMARCA5/SNF2H; the interaction is direct. Interacts with acetylated lysine residues on histone H1.4, H2A, H2B, H3 and H4 (in vitro). Interacts with EHMT1. Expressed at varying levels in several tissues, whereas a smaller transcript was expressed specifically in testis.

Its subcellular location is the nucleus. Functionally, regulatory subunit of the ATP-dependent BRF-1 and BRF-5 ISWI chromatin remodeling complexes, which form ordered nucleosome arrays on chromatin and facilitate access to DNA during DNA-templated processes such as DNA replication, transcription, and repair. Both complexes regulate the spacing of nucleosomes along the chromatin and have the ability to slide mononucleosomes to the center of a DNA template. The BRF-1 ISWI chromatin remodeling complex has a lower ATP hydrolysis rate than the BRF-5 ISWI chromatin remodeling complex. Chromatin reader protein, which may play a role in transcriptional regulation via interaction with ISWI. Involved in positively modulating the rate of age-related behavioral deterioration. Represses the expression of mitochondrial function-related genes, perhaps by occupying their promoter regions, working in concert with histone methyltransferase EHMT1. The polypeptide is Bromodomain adjacent to zinc finger domain protein 2B (BAZ2B) (Homo sapiens (Human)).